Consider the following 60-residue polypeptide: Cytotoxin sagitoxin (60 aa).

Intrachain disulfides connect Cys-3–Cys-21, Cys-14–Cys-38, Cys-42–Cys-53, and Cys-54–Cys-59.

This sequence belongs to the three-finger toxin family. Short-chain subfamily. Type IA cytotoxin sub-subfamily. In terms of assembly, monomer in solution; Homodimer and oligomer (homohexamer) in the presence of negatively charged lipids forming a pore with a size ranging between 20 and 30 Angstroms. Expressed by the venom gland.

The protein resides in the secreted. It is found in the target cell membrane. Its function is as follows. Shows cytolytic activity on many different cells by forming pore in lipid membranes. In vivo, increases heart rate or kill the animal by cardiac arrest. In addition, it binds to heparin with high affinity, interacts with Kv channel-interacting protein 1 (KCNIP1) in a calcium-independent manner, and binds to integrin alpha-V/beta-3 (ITGAV/ITGB3) with moderate affinity. In Naja sagittifera (Andaman cobra), this protein is Cytotoxin sagitoxin.